Consider the following 537-residue polypeptide: MQETGVHNGAHGADKFGLKNLKGVYWNFAAPQLYEHALKNGEAVLSADGALCADTGEFTGRSPKDKFTVRDATTETTMWWGGNQSITAEQFETLYQDFLKHAEGMTLFAQDLYGGADPSFQIKTRVFTELAWHSLFIRTLLRRPDRAALESFVPELTLIDLPSFRADPKRHGCRSENVVAIDFARKIVLIGGTQYAGEMKKSVFTTLNYYLPEKGVMPMHCSANVGPQGDTAIFFGLSGTGKTTLSADPNRTLIGDDEHGWGKDGVFNFEGGCYAKCIKLSPEAEPEIFAASSRFGAVLENVVLDEITRKPDFDDGSKTENTRSAYPLESIPNASLTGRAGQPKNVVMLAADAFGVMPPIAKLTPAQAMYHFLSGYTAKVAGTERGVTEPEPEFSTCFGSPFLPRDPSVYGNMLRELIAKHDVDCWLVNTGWTGGIYGTGHRMPIKVTRALLTAALDGSLRNVEFRTDPYFGFAVPTSLHGVPSDILDPVKTWADKAAFDATARKLVGMFQKNFAKFEAQVDADVRAAAPDVKMAAE.

Positions 61, 195, and 201 each coordinate substrate. ATP is bound by residues Lys-201, His-220, and 236 to 244 (GLSGTGKTT). Lys-201 and His-220 together coordinate Mn(2+). Residue Asp-257 participates in Mn(2+) binding. Glu-285, Arg-323, and Thr-448 together coordinate ATP. Residue Arg-323 coordinates substrate.

It belongs to the phosphoenolpyruvate carboxykinase (ATP) family. Requires Mn(2+) as cofactor.

It is found in the cytoplasm. It catalyses the reaction oxaloacetate + ATP = phosphoenolpyruvate + ADP + CO2. Its pathway is carbohydrate biosynthesis; gluconeogenesis. Involved in the gluconeogenesis. Catalyzes the conversion of oxaloacetate (OAA) to phosphoenolpyruvate (PEP) through direct phosphoryl transfer between the nucleoside triphosphate and OAA. The chain is Phosphoenolpyruvate carboxykinase (ATP) from Rhodopseudomonas palustris (strain HaA2).